The following is a 184-amino-acid chain: Photosystem I assembly protein Ycf4 (184 aa).

Transmembrane regions (helical) follow at residues 22–42 (FCWA…GISS) and 57–77 (IIFF…LFIS).

This sequence belongs to the Ycf4 family.

Its subcellular location is the plastid. It localises to the chloroplast thylakoid membrane. Seems to be required for the assembly of the photosystem I complex. The protein is Photosystem I assembly protein Ycf4 of Ipomoea purpurea (Common morning glory).